The chain runs to 696 residues: Polyribonucleotide nucleotidyltransferase (696 aa).

D489 and D495 together coordinate Mg(2+). Residues 556–615 (PQYVTMKINPEKIRDVIGKGGVVIREITEATNCAIDISDDGTIKIAAHTTEEGEAAKRRI) enclose the KH domain. The S1 motif domain occupies 625–693 (GKVYEGTVVK…RQGRVRLSMK (69 aa)).

This sequence belongs to the polyribonucleotide nucleotidyltransferase family. Component of the RNA degradosome, which is a multiprotein complex involved in RNA processing and mRNA degradation. Mg(2+) serves as cofactor.

The protein resides in the cytoplasm. It carries out the reaction RNA(n+1) + phosphate = RNA(n) + a ribonucleoside 5'-diphosphate. Functionally, involved in mRNA degradation. Catalyzes the phosphorolysis of single-stranded polyribonucleotides processively in the 3'- to 5'-direction. This Coxiella burnetii (strain RSA 331 / Henzerling II) protein is Polyribonucleotide nucleotidyltransferase.